The chain runs to 554 residues: MKKAWWKEAVVYQIYPRSFKDSNGDGIGDIQGIRTKLSYIKELGADVIWICPLYDSPNADNGYDIRDYQNILSEFGTMEDFDELLGDIHDLDMKLIMDLVVNHTSDEHPWFIESRSSIHSEKRDWYIWKDGKNGKTPNNWESIFGGPAWEYDQKTSQYYLHLFDKKQPDLNWENEKVRNAVYDMINWWLDKGIDGFRVDAITHIKKKEGFPDMPNPKGLDYVPSFPYHMNADGIMDLLTELKENTFSRYPIMTVGEANGVAAKEAADWAGEKNGIFSMIFQFEHLGLWDVEINESIDIVAFKRILTDWQDSLEGIGWNALFMENHDQPRSVSVWGDDGVYLKESAKALSAVYFLMKGTPFIYQGQELGMTNVAFPSIEDYDDVALKRLYETKTAKGTSHEDVMKIVWKKGRDNSRTPMQWNAGPYAGFSEAKPWIGINENYKWLNAEAQKNDKTSVYHFYKSLIKLRQTYDVFINGTYELILPEDQQIFAYLRKNESHTALIAANLTGTPALFRHSGLPLSSDALVLSNIETEPHKHMTSVLLKPYEARIYLWC.

Aspartate 199 serves as the catalytic Nucleophile. Catalysis depends on glutamate 256, which acts as the Proton donor.

Belongs to the glycosyl hydrolase 13 family.

Its subcellular location is the cytoplasm. The enzyme catalyses Hydrolysis of (1-&gt;6)-alpha-D-glucosidic linkages in some oligosaccharides produced from starch and glycogen by alpha-amylase, and in isomaltose.. This chain is Probable oligo-1,6-glucosidase 3 (yugT), found in Bacillus subtilis (strain 168).